Reading from the N-terminus, the 200-residue chain is 3-isopropylmalate dehydratase small subunit (200 aa).

The protein belongs to the LeuD family. LeuD type 1 subfamily. In terms of assembly, heterodimer of LeuC and LeuD.

It catalyses the reaction (2R,3S)-3-isopropylmalate = (2S)-2-isopropylmalate. Its pathway is amino-acid biosynthesis; L-leucine biosynthesis; L-leucine from 3-methyl-2-oxobutanoate: step 2/4. Catalyzes the isomerization between 2-isopropylmalate and 3-isopropylmalate, via the formation of 2-isopropylmaleate. The polypeptide is 3-isopropylmalate dehydratase small subunit (Vibrio campbellii (strain ATCC BAA-1116)).